The following is a 445-amino-acid chain: GRAM domain-containing protein 2B (445 aa).

Position 1 is an N-acetylmethionine (Met1). The disordered stretch occupies residues 1-118 (MVKKRLSSSD…ERKKSSSSSQ (118 aa)). 2 stretches are compositionally biased toward polar residues: residues 18 to 44 (PSNS…SSEA) and 56 to 68 (KSPT…SSVE). Over residues 82 to 93 (SKSSFDGSSLLS) the composition is skewed to low complexity. A compositionally biased stretch (basic and acidic residues) spans 94–112 (DKNDCKTESKTDSKTERKK). The region spanning 123 to 190 (MHFHKLFLDV…FSVTLIKKTK (68 aa)) is the GRAM domain. The span at 233-246 (TSVGNSPNPSSAEN) shows a compositional bias: polar residues. The segment at 233-252 (TSVGNSPNPSSAENSFRADR) is disordered. A phosphoserine mark is found at Ser238, Ser255, and Ser265. The disordered stretch occupies residues 277–331 (DLEGYSSSGSQTPESENSRDFHVTESQTVLNVTKGETKPPRTDAHGSRAPDGKAK). Over residues 281–291 (YSSSGSQTPES) the composition is skewed to polar residues. Residues 311–330 (GETKPPRTDAHGSRAPDGKA) show a composition bias toward basic and acidic residues.

In Mus musculus (Mouse), this protein is GRAM domain-containing protein 2B (Gramd2b).